Reading from the N-terminus, the 55-residue chain is Accessory gland-specific peptide 70A (55 aa).

The N-terminal stretch at 1–19 is a signal peptide; the sequence is MKTLSLFLVLVCLLGLVQS. 4 positions are modified to hydroxyproline: P28, P32, P34, and P38. The cysteines at positions 43 and 55 are disulfide-linked.

In terms of tissue distribution, main cells of the accessory glands of males (paragonial gland).

Its subcellular location is the secreted. In terms of biological role, represses female sexual receptivity and stimulates oviposition. This Drosophila mauritiana (Fruit fly) protein is Accessory gland-specific peptide 70A (Acp70A).